The sequence spans 275 residues: Vitamin B12-binding protein (275 aa).

A signal peptide spans 1–19 (MMNKICLYLPLFFSSLTMA). Positions 25–272 (RVISLAPHAT…EVCEHFESVK (248 aa)) constitute a Fe/B12 periplasmic-binding domain. Cys-185 and Cys-265 are disulfide-bonded.

Belongs to the BtuF family. As to quaternary structure, the complex is composed of two ATP-binding proteins (BtuD), two transmembrane proteins (BtuC) and a solute-binding protein (BtuF).

Its subcellular location is the periplasm. In terms of biological role, part of the ABC transporter complex BtuCDF involved in vitamin B12 import. Binds vitamin B12 and delivers it to the periplasmic surface of BtuC. The chain is Vitamin B12-binding protein from Vibrio parahaemolyticus serotype O3:K6 (strain RIMD 2210633).